The following is a 699-amino-acid chain: Glycine--tRNA ligase beta subunit (699 aa).

Belongs to the class-II aminoacyl-tRNA synthetase family. As to quaternary structure, tetramer of two alpha and two beta subunits.

The protein localises to the cytoplasm. The enzyme catalyses tRNA(Gly) + glycine + ATP = glycyl-tRNA(Gly) + AMP + diphosphate. The polypeptide is Glycine--tRNA ligase beta subunit (Baumannia cicadellinicola subsp. Homalodisca coagulata).